The sequence spans 466 residues: UDP-N-acetylmuramoylalanine--D-glutamate ligase (466 aa).

121–127 (GTNGKST) provides a ligand contact to ATP.

Belongs to the MurCDEF family.

It localises to the cytoplasm. The catalysed reaction is UDP-N-acetyl-alpha-D-muramoyl-L-alanine + D-glutamate + ATP = UDP-N-acetyl-alpha-D-muramoyl-L-alanyl-D-glutamate + ADP + phosphate + H(+). Its pathway is cell wall biogenesis; peptidoglycan biosynthesis. Functionally, cell wall formation. Catalyzes the addition of glutamate to the nucleotide precursor UDP-N-acetylmuramoyl-L-alanine (UMA). The polypeptide is UDP-N-acetylmuramoylalanine--D-glutamate ligase (Nitrobacter winogradskyi (strain ATCC 25391 / DSM 10237 / CIP 104748 / NCIMB 11846 / Nb-255)).